The chain runs to 176 residues: Oleosin Ara h 14.0101 (176 aa).

Ala-2 is subject to N-acetylalanine; alternate. A run of 2 helical transmembrane segments spans residues 50-80 (IIAV…GLAI) and 95-117 (AVVT…LTGL). Positions 157–176 (TKDAGQQIQTKAQDVKRSSS) are disordered.

This sequence belongs to the oleosin family. As to quaternary structure, homodimer. Forms oligomers. In terms of tissue distribution, expressed in seeds (at protein level). Not expressed in leaves.

It is found in the lipid droplet. Its subcellular location is the membrane. In terms of biological role, may have a structural role to stabilize the lipid body during desiccation of the seed by preventing coalescence of the oil. Probably interacts with both lipid and phospholipid moieties of lipid bodies. May also provide recognition signals for specific lipase anchorage in lipolysis during seedling growth. This is Oleosin Ara h 14.0101 from Arachis hypogaea (Peanut).